The primary structure comprises 162 residues: Globin CTT-VI (162 aa).

A signal peptide spans 1-15 (MKFLVLALCIAAASA). The region spanning 17–161 (VLTTEQADLV…TYAMLFSAMD (145 aa)) is the Globin domain. Residues His75 and His110 each contribute to the heme b site.

It belongs to the globin family. As to quaternary structure, homodimer.

The chain is Globin CTT-VI (CTT-6) from Chironomus thummi thummi (Midge).